Here is a 161-residue protein sequence, read N- to C-terminus: MPDELRAEKSFPSKPYDSLKNKSEFDKVYQKGFKKHNPFFSLFVLDLSKEPPKEKEGFKDPLSCRLKDKKALYLLGLSVSKKVGNAVKRNLIKRRLRSLTLKHAALCQGLALVFVPRSDCYHLDFWALEKHFLEMLTSIKNYMNKALKGLKKGMTHTYAKQ.

The tract at residues 1 to 20 (MPDELRAEKSFPSKPYDSLK) is disordered.

The protein belongs to the RnpA family. In terms of assembly, consists of a catalytic RNA component (M1 or rnpB) and a protein subunit.

It carries out the reaction Endonucleolytic cleavage of RNA, removing 5'-extranucleotides from tRNA precursor.. In terms of biological role, RNaseP catalyzes the removal of the 5'-leader sequence from pre-tRNA to produce the mature 5'-terminus. It can also cleave other RNA substrates such as 4.5S RNA. The protein component plays an auxiliary but essential role in vivo by binding to the 5'-leader sequence and broadening the substrate specificity of the ribozyme. This Helicobacter pylori (strain P12) protein is Ribonuclease P protein component.